The sequence spans 21 residues: Nigrocin-2 (21 aa).

A disulfide bridge connects residues C15 and C21.

As to expression, expressed by the skin dorsal glands.

Its subcellular location is the secreted. Thanks to its single linear amphipathic alpha-helix, may integrate into membrane phospholipids, leading to lysis of the membrane. Shows antibacterial activity against both Gram-positive and Gram-negative bacteria and against the fungus C.albicans. Has no hemolytic activity. The sequence is that of Nigrocin-2 from Pelophylax nigromaculatus (Black-spotted frog).